A 397-amino-acid polypeptide reads, in one-letter code: Trans-2-enoyl-CoA reductase [NADH] (397 aa).

Residues 53–58, 79–80, 116–117, and 144–145 each bind NAD(+); these read GCSNGY, FE, DA, and LA. Y230 is a binding site for substrate. Catalysis depends on Y240, which acts as the Proton donor. Residues K249 and 276–278 contribute to the NAD(+) site; that span reads LVT.

This sequence belongs to the TER reductase family. Monomer.

It carries out the reaction a 2,3-saturated acyl-CoA + NAD(+) = a (2E)-enoyl-CoA + NADH + H(+). It functions in the pathway lipid metabolism; fatty acid biosynthesis. Inhibited by lauroyl-CoA. Functionally, involved in the fatty acid synthesis (FAS II). Catalyzes the reduction of the carbon-carbon double bond of crotonyl-CoA to yield butyryl-CoA. In vitro it can also use hexenoyl-CoA and dodecenoyl-CoA as substrates. In Treponema denticola (strain ATCC 35405 / DSM 14222 / CIP 103919 / JCM 8153 / KCTC 15104), this protein is Trans-2-enoyl-CoA reductase [NADH].